The primary structure comprises 110 residues: Insulin (110 aa).

The signal sequence occupies residues M1 to A24. 3 disulfides stabilise this stretch: C31–C96, C43–C109, and C95–C100. Residues E57–Q87 constitute a propeptide, c peptide.

It belongs to the insulin family. As to quaternary structure, heterodimer of a B chain and an A chain linked by two disulfide bonds.

The protein localises to the secreted. In terms of biological role, insulin decreases blood glucose concentration. It increases cell permeability to monosaccharides, amino acids and fatty acids. It accelerates glycolysis, the pentose phosphate cycle, and glycogen synthesis in liver. The sequence is that of Insulin (INS) from Oryctolagus cuniculus (Rabbit).